We begin with the raw amino-acid sequence, 548 residues long: Membrane protein insertase YidC (548 aa).

Residues 6–26 (NLLVIALLFVSFMIWQAWEQD) traverse the membrane as a helical segment. Positions 28 to 56 (NPQPQTQQTTQTTTTAAGSAADQGVPASG) are disordered. Over residues 29 to 42 (PQPQTQQTTQTTTT) the composition is skewed to low complexity. 4 consecutive transmembrane segments (helical) span residues 350–370 (FVGN…GIMY), 424–444 (FPLI…MGSI), 458–478 (LSAQ…MFFI), and 499–519 (PVIF…YYIV).

This sequence belongs to the OXA1/ALB3/YidC family. Type 1 subfamily. As to quaternary structure, interacts with the Sec translocase complex via SecD. Specifically interacts with transmembrane segments of nascent integral membrane proteins during membrane integration.

It localises to the cell inner membrane. In terms of biological role, required for the insertion and/or proper folding and/or complex formation of integral membrane proteins into the membrane. Involved in integration of membrane proteins that insert both dependently and independently of the Sec translocase complex, as well as at least some lipoproteins. Aids folding of multispanning membrane proteins. This is Membrane protein insertase YidC from Salmonella heidelberg (strain SL476).